We begin with the raw amino-acid sequence, 241 residues long: Ribulose-phosphate 3-epimerase 1 (241 aa).

Ser21 serves as a coordination point for substrate. The a divalent metal cation site is built by His46, Asp48, and His79. Asp48 (proton acceptor) is an active-site residue. Substrate contacts are provided by residues His79, 155–158, 192–194, and 214–215; these read GFGG, DGG, and GS. A divalent metal cation is bound at residue Asp192. The active-site Proton donor is the Asp192.

The protein belongs to the ribulose-phosphate 3-epimerase family. A divalent metal cation is required as a cofactor.

The enzyme catalyses D-ribulose 5-phosphate = D-xylulose 5-phosphate. It functions in the pathway carbohydrate degradation. Catalyzes the reversible epimerization of D-ribulose 5-phosphate to D-xylulose 5-phosphate. The chain is Ribulose-phosphate 3-epimerase 1 from Cupriavidus necator (strain ATCC 17699 / DSM 428 / KCTC 22496 / NCIMB 10442 / H16 / Stanier 337) (Ralstonia eutropha).